The chain runs to 215 residues: Cytochrome b6 (215 aa).

A helical transmembrane segment spans residues 32-52 (IFHCLGGITLTCFLVQVATGF). Cys-35 contributes to the heme c binding site. Heme b-binding residues include His-86 and His-100. Helical transmembrane passes span 90–110 (ASMMVLMMILHVFRVYLTGGF), 116–136 (LTWVTGVVLAVLTASFGVTGY), and 186–206 (LHTFVLPLLTAVFMLMHFSMI). Residues His-187 and His-202 each coordinate heme b.

Belongs to the cytochrome b family. PetB subfamily. In terms of assembly, the 4 large subunits of the cytochrome b6-f complex are cytochrome b6, subunit IV (17 kDa polypeptide, PetD), cytochrome f and the Rieske protein, while the 4 small subunits are PetG, PetL, PetM and PetN. The complex functions as a dimer. Requires heme b as cofactor. Heme c is required as a cofactor.

The protein resides in the plastid. The protein localises to the chloroplast thylakoid membrane. Functionally, component of the cytochrome b6-f complex, which mediates electron transfer between photosystem II (PSII) and photosystem I (PSI), cyclic electron flow around PSI, and state transitions. The polypeptide is Cytochrome b6 (Nymphaea alba (White water-lily)).